The primary structure comprises 54 residues: Small ribosomal subunit protein uS14 (54 aa).

4 residues coordinate Zn(2+): Cys-19, Cys-22, Cys-37, and Cys-40.

Belongs to the universal ribosomal protein uS14 family. Zinc-binding uS14 subfamily. In terms of assembly, part of the 30S ribosomal subunit. Zn(2+) is required as a cofactor.

In terms of biological role, binds 16S rRNA, required for the assembly of 30S particles. The chain is Small ribosomal subunit protein uS14 from Aeropyrum pernix (strain ATCC 700893 / DSM 11879 / JCM 9820 / NBRC 100138 / K1).